The following is a 62-amino-acid chain: Cytotoxin-like basic protein (62 aa).

Intrachain disulfides connect Cys3–Cys22, Cys15–Cys40, Cys44–Cys55, and Cys56–Cys61.

It belongs to the three-finger toxin family. Short-chain subfamily. Orphan group XV sub-subfamily. Expressed by the venom gland.

The protein resides in the secreted. It localises to the target cell membrane. In terms of biological role, has low cytotoxic activity. This is Cytotoxin-like basic protein from Naja naja (Indian cobra).